We begin with the raw amino-acid sequence, 147 residues long: Nucleoside diphosphate kinase (147 aa).

Residues Lys-9, Phe-57, Arg-85, Thr-91, Arg-102, and Asn-112 each contribute to the ATP site. His-115 (pros-phosphohistidine intermediate) is an active-site residue.

The protein belongs to the NDK family. Homotetramer. Mg(2+) serves as cofactor.

It localises to the cytoplasm. It catalyses the reaction a 2'-deoxyribonucleoside 5'-diphosphate + ATP = a 2'-deoxyribonucleoside 5'-triphosphate + ADP. The enzyme catalyses a ribonucleoside 5'-diphosphate + ATP = a ribonucleoside 5'-triphosphate + ADP. In terms of biological role, major role in the synthesis of nucleoside triphosphates other than ATP. The ATP gamma phosphate is transferred to the NDP beta phosphate via a ping-pong mechanism, using a phosphorylated active-site intermediate. The polypeptide is Nucleoside diphosphate kinase (Brevibacillus brevis (strain 47 / JCM 6285 / NBRC 100599)).